Consider the following 572-residue polypeptide: Moesin (572 aa).

Residues 1–294 enclose the FERM domain; the sequence is MPRGVAVRVT…GNHELYMRRR (294 aa). Disordered regions lie at residues 444 to 508 and 523 to 544; these read SQER…SYLP and LQAM…QENI. Over residues 454 to 475 the composition is skewed to low complexity; the sequence is AQEAAAAQHAAQLAAQREAQQL. Positions 480-502 are enriched in acidic residues; it reads EGEEDEQDHELEVQQDDNDDLDD. The segment covering 525 to 544 has biased composition (basic and acidic residues); the sequence is AMKDESKGEDRYDKIHQENI.

Its subcellular location is the cell membrane. The protein localises to the cytoplasm. It is found in the cytoskeleton. The protein resides in the cell projection. Its function is as follows. Probably involved in connections of major cytoskeletal structures to the plasma membrane. This is Moesin from Lytechinus variegatus (Green sea urchin).